The sequence spans 187 residues: GTP cyclohydrolase 1 (187 aa).

Residues C76, H79, and C148 each coordinate Zn(2+).

Belongs to the GTP cyclohydrolase I family. As to quaternary structure, toroid-shaped homodecamer, composed of two pentamers of five dimers.

It catalyses the reaction GTP + H2O = 7,8-dihydroneopterin 3'-triphosphate + formate + H(+). Its pathway is cofactor biosynthesis; 7,8-dihydroneopterin triphosphate biosynthesis; 7,8-dihydroneopterin triphosphate from GTP: step 1/1. This is GTP cyclohydrolase 1 from Streptococcus suis (strain 98HAH33).